A 152-amino-acid polypeptide reads, in one-letter code: Large-conductance mechanosensitive channel (152 aa).

3 consecutive transmembrane segments (helical) span residues 14–34 (VVDM…VKSL), 39–59 (LMPG…FLVI), and 85–105 (GLFI…FLVI).

It belongs to the MscL family. In terms of assembly, homopentamer.

It localises to the cell inner membrane. Functionally, channel that opens in response to stretch forces in the membrane lipid bilayer. May participate in the regulation of osmotic pressure changes within the cell. The sequence is that of Large-conductance mechanosensitive channel from Syntrophus aciditrophicus (strain SB).